A 461-amino-acid chain; its full sequence is Chromosomal replication initiator protein DnaA (461 aa).

A domain I, interacts with DnaA modulators region spans residues 1–83 (MDHSPWQRCL…LRFDVGSKPT (83 aa)). A domain II region spans residues 83–124 (TIDNSVTNSPVSRNTGGNESLFAKATSAPKVAEPESNIPKKT). Positions 125–341 (NVRLNYTFEN…GALNRVIANA (217 aa)) are domain III, AAA+ region. ATP contacts are provided by glycine 169, glycine 171, lysine 172, and threonine 173. The interval 342-461 (NFTGRAITID…YSNLIRTLSS (120 aa)) is domain IV, binds dsDNA.

This sequence belongs to the DnaA family. In terms of assembly, oligomerizes as a right-handed, spiral filament on DNA at oriC.

It localises to the cytoplasm. Functionally, plays an essential role in the initiation and regulation of chromosomal replication. ATP-DnaA binds to the origin of replication (oriC) to initiate formation of the DNA replication initiation complex once per cell cycle. Binds the DnaA box (a 9 base pair repeat at the origin) and separates the double-stranded (ds)DNA. Forms a right-handed helical filament on oriC DNA; dsDNA binds to the exterior of the filament while single-stranded (ss)DNA is stabiized in the filament's interior. The ATP-DnaA-oriC complex binds and stabilizes one strand of the AT-rich DNA unwinding element (DUE), permitting loading of DNA polymerase. After initiation quickly degrades to an ADP-DnaA complex that is not apt for DNA replication. Binds acidic phospholipids. The polypeptide is Chromosomal replication initiator protein DnaA (Colwellia psychrerythraea (strain 34H / ATCC BAA-681) (Vibrio psychroerythus)).